The following is a 472-amino-acid chain: Divalent metal cation transporter MntH (472 aa).

A run of 11 helical transmembrane segments spans residues 59–79, 92–112, 144–164, 167–187, 196–216, 233–253, 288–308, 325–345, 377–397, 402–422, and 439–459; these read LLAF…PGNW, MLLS…ALAA, LAII…LNLL, VPII…LLLM, AFVI…IVLA, VVAD…TVMP, LALM…AAVF, LLAP…ALLA, VLTR…YGEQ, LLLL…IPLL, and WLMV…VKLL.

The protein belongs to the NRAMP family.

It localises to the cell inner membrane. H(+)-stimulated, divalent metal cation uptake system. The sequence is that of Divalent metal cation transporter MntH from Xylella fastidiosa (strain Temecula1 / ATCC 700964).